Reading from the N-terminus, the 325-residue chain is DNA-directed RNA polymerase subunit alpha (325 aa).

Residues 1–231 form an alpha N-terminal domain (alpha-NTD) region; it reads MQTSLLKPKI…DQLSVFAALE (231 aa). An alpha C-terminal domain (alpha-CTD) region spans residues 246 to 325; it reads IDPILLRPVD…ENWPPAGLDK (80 aa).

This sequence belongs to the RNA polymerase alpha chain family. Homodimer. The RNAP catalytic core consists of 2 alpha, 1 beta, 1 beta' and 1 omega subunit. When a sigma factor is associated with the core the holoenzyme is formed, which can initiate transcription.

It catalyses the reaction RNA(n) + a ribonucleoside 5'-triphosphate = RNA(n+1) + diphosphate. In terms of biological role, DNA-dependent RNA polymerase catalyzes the transcription of DNA into RNA using the four ribonucleoside triphosphates as substrates. This is DNA-directed RNA polymerase subunit alpha from Burkholderia thailandensis (strain ATCC 700388 / DSM 13276 / CCUG 48851 / CIP 106301 / E264).